Consider the following 262-residue polypeptide: Ribosomal RNA small subunit methyltransferase A (262 aa).

Histidine 13, leucine 15, glycine 40, glutamate 61, aspartate 85, and asparagine 103 together coordinate S-adenosyl-L-methionine.

Belongs to the class I-like SAM-binding methyltransferase superfamily. rRNA adenine N(6)-methyltransferase family. RsmA subfamily.

It is found in the cytoplasm. The enzyme catalyses adenosine(1518)/adenosine(1519) in 16S rRNA + 4 S-adenosyl-L-methionine = N(6)-dimethyladenosine(1518)/N(6)-dimethyladenosine(1519) in 16S rRNA + 4 S-adenosyl-L-homocysteine + 4 H(+). Functionally, specifically dimethylates two adjacent adenosines (A1518 and A1519) in the loop of a conserved hairpin near the 3'-end of 16S rRNA in the 30S particle. May play a critical role in biogenesis of 30S subunits. In Bordetella petrii (strain ATCC BAA-461 / DSM 12804 / CCUG 43448), this protein is Ribosomal RNA small subunit methyltransferase A.